A 572-amino-acid polypeptide reads, in one-letter code: Urease subunit alpha (572 aa).

Positions 134-572 (AGIDTHIHLI…AAMNQLYFFG (439 aa)) constitute a Urease domain. Ni(2+)-binding residues include H139, H141, and K222. K222 is modified (N6-carboxylysine). Substrate is bound at residue H224. Ni(2+) is bound by residues H251 and H277. H325 acts as the Proton donor in catalysis. D365 contributes to the Ni(2+) binding site.

This sequence belongs to the metallo-dependent hydrolases superfamily. Urease alpha subunit family. As to quaternary structure, heterotrimer of UreA (gamma), UreB (beta) and UreC (alpha) subunits. Three heterotrimers associate to form the active enzyme. It depends on Ni cation as a cofactor. In terms of processing, carboxylation allows a single lysine to coordinate two nickel ions.

The protein localises to the cytoplasm. The enzyme catalyses urea + 2 H2O + H(+) = hydrogencarbonate + 2 NH4(+). It participates in nitrogen metabolism; urea degradation; CO(2) and NH(3) from urea (urease route): step 1/1. The polypeptide is Urease subunit alpha (Edwardsiella ictaluri (strain 93-146)).